The following is a 347-amino-acid chain: 4-hydroxy-2-oxovalerate aldolase 4 (347 aa).

One can recognise a Pyruvate carboxyltransferase domain in the interval 9 to 259; that stretch reads ITIVDTTLRD…DTGVDLFPLI (251 aa). Residues 17-18, S171, and H198 each bind substrate; that span reads RD. D18 is a binding site for Mn(2+). Mn(2+)-binding residues include H198 and H200. Residue Y289 coordinates substrate.

The protein belongs to the 4-hydroxy-2-oxovalerate aldolase family.

The catalysed reaction is (S)-4-hydroxy-2-oxopentanoate = acetaldehyde + pyruvate. This is 4-hydroxy-2-oxovalerate aldolase 4 from Rhodococcus opacus (strain B4).